The primary structure comprises 102 residues: Small ribosomal subunit protein uS10 (102 aa).

The protein belongs to the universal ribosomal protein uS10 family. Part of the 30S ribosomal subunit.

Its function is as follows. Involved in the binding of tRNA to the ribosomes. The protein is Small ribosomal subunit protein uS10 of Thermobifida fusca (strain YX).